A 240-amino-acid chain; its full sequence is DNA repair protein RecO (240 aa).

It belongs to the RecO family.

In terms of biological role, involved in DNA repair and RecF pathway recombination. This is DNA repair protein RecO from Pseudoalteromonas atlantica (strain T6c / ATCC BAA-1087).